We begin with the raw amino-acid sequence, 438 residues long: Acid phosphatase type 7 (438 aa).

Residues 1 to 26 form the signal peptide; that stretch reads MHPLPGYWSCYCLLLLFSLGVQGSLG. Fe cation is bound by residues Asp141, Asp170, and Tyr173. Asp170 serves as a coordination point for Zn(2+). Asn205 contributes to the Zn(2+) binding site. N-linked (GlcNAc...) asparagine glycosylation occurs at Asn211. His286 and His333 together coordinate Zn(2+). Residue His335 coordinates Fe cation. N-linked (GlcNAc...) asparagine glycosylation is found at Asn350 and Asn404.

The protein belongs to the metallophosphoesterase superfamily. Purple acid phosphatase family. It depends on Fe cation as a cofactor. The cofactor is Zn(2+).

Its subcellular location is the secreted. It catalyses the reaction a phosphate monoester + H2O = an alcohol + phosphate. This chain is Acid phosphatase type 7, found in Homo sapiens (Human).